Here is a 429-residue protein sequence, read N- to C-terminus: Probable alcohol acetyltransferase orf1 (429 aa).

The protein belongs to the alcohol acetyltransferase FCK4 family.

It functions in the pathway secondary metabolite biosynthesis. In terms of biological role, probable alcohol acetyltransferase; part of the gene cluster that mediates the biosynthesis of the glycolipid biosurfactant ustilagic acid (UA). UA is a secreted cellobiose glycolipid that is toxic for many microorganisms and confers biocontrol activity to U.maydis. UA consists of 15,16-dihydroxypalmitic or 2,15,16-trihydroxypalmitic acid, which is O-glycosidically linked to cellobiose at its terminal hydroxyl group. In addition, the cellobiose moiety is acetylated and acylated with a short-chain hydroxy fatty acid. UA biosynthesis starts with omega-hydroxylation of palmitic acid catalyzed by the cytochrome P450 monooxygenase cyp1. Terminal hydroxylation of palmitic acid precedes subterminal hydroxylation catalyzed by the cytochrome P450 monooxygenase cyp2. Sequential glucosylation of the hydroxy fatty acid is probably catalyzed by the glycosyltransferase ugt1. The cellobiose lipid is further decorated by acetylation of the proximal glucose residue and by acylation with a short-chain beta-hydroxy fatty acid at the distal glucose residue. The acyltransferase uat1 may be a good candidate for catalyzing either acetylation or acylation of the cellobiose lipid. The fatty acid synthase fas2 may be involved in synthesis of the carbon backbone of the short-chain beta-hydroxy fatty acid esterified to the cellobiose disaccharide. The secreted UA consists of a mixture of both alpha-hydroxylated and non-hydroxylated glycolipids; therefore, alpha-hydroxylation of the long-chain fatty, catalyzed by the fatty acid hydroxylase ahd1, occurs late in UA biosynthesis and may be the last step before secretion. In Mycosarcoma maydis (Corn smut fungus), this protein is Probable alcohol acetyltransferase orf1.